Here is a 369-residue protein sequence, read N- to C-terminus: Molybdenum import ATP-binding protein ModC (369 aa).

Residues 7–243 form the ABC transporter domain; the sequence is PGQAGIHARF…LDLPMAMTDD (237 aa). Residue 41 to 48 participates in ATP binding; sequence GQSGSGKT. A Mop domain is found at 304 to 369; sequence EGSILNVLAV…AQIKAVSLLA (66 aa).

Belongs to the ABC transporter superfamily. Molybdate importer (TC 3.A.1.8) family. In terms of assembly, the complex is composed of two ATP-binding proteins (ModC), two transmembrane proteins (ModB) and a solute-binding protein (ModA).

Its subcellular location is the cell inner membrane. It catalyses the reaction molybdate(out) + ATP + H2O = molybdate(in) + ADP + phosphate + H(+). Its function is as follows. Part of the ABC transporter complex ModABC involved in molybdenum import. Responsible for energy coupling to the transport system. This Bordetella bronchiseptica (strain ATCC BAA-588 / NCTC 13252 / RB50) (Alcaligenes bronchisepticus) protein is Molybdenum import ATP-binding protein ModC.